We begin with the raw amino-acid sequence, 416 residues long: E3 ubiquitin-protein ligase RNFT1 (416 aa).

Residues Gln27–Val45 are compositionally biased toward polar residues. Disordered stretches follow at residues Gln27–Pro50 and Gly63–Arg116. Residues Gly77–Arg86 show a composition bias toward basic residues. 6 helical membrane passes run Leu146–Tyr166, Leu184–Phe204, Val214–Ile234, Phe237–Val257, Tyr265–Phe287, and Trp302–Gly322. The tract at residues Cys349–Gln400 is required for ubiquitin ligase activity and for protection against ER stress-induced cell death. The RING-type zinc-finger motif lies at Cys356–Arg394.

It is found in the endoplasmic reticulum membrane. It catalyses the reaction S-ubiquitinyl-[E2 ubiquitin-conjugating enzyme]-L-cysteine + [acceptor protein]-L-lysine = [E2 ubiquitin-conjugating enzyme]-L-cysteine + N(6)-ubiquitinyl-[acceptor protein]-L-lysine.. The protein operates within protein modification; protein ubiquitination. Functionally, E3 ubiquitin-protein ligase that acts in the endoplasmic reticulum (ER)-associated degradation (ERAD) pathway, which targets misfolded proteins that accumulate in the endoplasmic reticulum (ER) for ubiquitination and subsequent proteasome-mediated degradation. Protects cells from ER stress-induced apoptosis. In Xenopus tropicalis (Western clawed frog), this protein is E3 ubiquitin-protein ligase RNFT1 (rnft1).